Reading from the N-terminus, the 179-residue chain is Large ribosomal subunit protein uL5 (179 aa).

It belongs to the universal ribosomal protein uL5 family. Part of the 50S ribosomal subunit; part of the 5S rRNA/L5/L18/L25 subcomplex. Contacts the 5S rRNA and the P site tRNA. Forms a bridge to the 30S subunit in the 70S ribosome.

Functionally, this is one of the proteins that bind and probably mediate the attachment of the 5S RNA into the large ribosomal subunit, where it forms part of the central protuberance. In the 70S ribosome it contacts protein S13 of the 30S subunit (bridge B1b), connecting the 2 subunits; this bridge is implicated in subunit movement. Contacts the P site tRNA; the 5S rRNA and some of its associated proteins might help stabilize positioning of ribosome-bound tRNAs. This chain is Large ribosomal subunit protein uL5, found in Desulfatibacillum aliphaticivorans.